The primary structure comprises 317 residues: MSNAVHETDSKNTVASKPPLDPHLKALENEAIHIFREVAAEFDNPVMLYSIGKDSSVLLHLARKAFFPGRIPFPLLHVNTGWKFKEMIEFRDNIVKEYDLDLISYTNPRGALENVTPFSHGSALYTDIMKTEALRQALDAGQFDAAFGGARRDEEASRAKERIYSFRTPDHKWDPRNQRPELWNIYNGMVRKGESVRAFPLSNWTEVDIWRYIEAENIPLVPLYYAAERPYIERDGMMILAEDERLELLPGEEIKHGSIRFRTLGCFPLTGAIRSEAATLQDVIAELEIATVSERQGRAIDRDQSGSMEKKKREGYF.

Residues 1 to 10 (MSNAVHETDS) are compositionally biased toward basic and acidic residues. Disordered regions lie at residues 1-21 (MSNA…PPLD) and 298-317 (RAID…EGYF).

The protein belongs to the PAPS reductase family. CysD subfamily. Heterodimer composed of CysD, the smaller subunit, and CysN.

It catalyses the reaction sulfate + ATP + H(+) = adenosine 5'-phosphosulfate + diphosphate. It participates in sulfur metabolism; hydrogen sulfide biosynthesis; sulfite from sulfate: step 1/3. With CysN forms the ATP sulfurylase (ATPS) that catalyzes the adenylation of sulfate producing adenosine 5'-phosphosulfate (APS) and diphosphate, the first enzymatic step in sulfur assimilation pathway. APS synthesis involves the formation of a high-energy phosphoric-sulfuric acid anhydride bond driven by GTP hydrolysis by CysN coupled to ATP hydrolysis by CysD. The polypeptide is Sulfate adenylyltransferase subunit 2 (Agrobacterium fabrum (strain C58 / ATCC 33970) (Agrobacterium tumefaciens (strain C58))).